We begin with the raw amino-acid sequence, 236 residues long: CHD1 helical C-terminal domain containing protein 1 (236 aa).

The segment at L44–T145 is CHD1 helical C-terminal domain (CHCT). Residues L184–P236 are disordered. Residues S202–Q216 show a composition bias toward basic and acidic residues.

Its subcellular location is the cytoplasm. It localises to the nucleus. May play a role in regulation of apoptosis. This is CHD1 helical C-terminal domain containing protein 1 from Homo sapiens (Human).